The following is a 355-amino-acid chain: Probable sugar phosphate/phosphate translocator At3g10290 (355 aa).

The tract at residues 19-51 (QKKQPNLSISSTTKMNKKNPDQKSDMSSSSSSP) is disordered. Over residues 22–32 (QPNLSISSTTK) the composition is skewed to polar residues. 10 helical membrane passes run 55 to 75 (TLFI…VLLL), 89 to 109 (IFLT…SIVF), 124 to 144 (FLKV…GNIS), 150 to 170 (VSFN…FAYI), 177 to 197 (AWVT…ASGG), 198 to 218 (EPGF…ARAF), 239 to 259 (LMLY…IFME), 277 to 297 (YILL…NFLV), 305 to 325 (TLQV…ILLF), and 328 to 348 (PVTV…VAYG).

Belongs to the TPT transporter family. TPT (TC 2.A.7.9) subfamily.

The protein localises to the membrane. This is Probable sugar phosphate/phosphate translocator At3g10290 from Arabidopsis thaliana (Mouse-ear cress).